Reading from the N-terminus, the 322-residue chain is UPF0324 membrane protein BB4178 (322 aa).

The next 10 membrane-spanning stretches (helical) occupy residues Phe-13 to Phe-35, Phe-50 to Ile-69, Gly-76 to Gly-98, Thr-108 to Phe-127, Ala-139 to His-161, Ala-171 to Ile-193, Val-209 to Ala-231, Val-241 to Leu-260, Val-273 to Ile-292, and Gly-296 to Val-318.

It belongs to the UPF0324 family.

Its subcellular location is the cell membrane. This Bordetella bronchiseptica (strain ATCC BAA-588 / NCTC 13252 / RB50) (Alcaligenes bronchisepticus) protein is UPF0324 membrane protein BB4178.